A 392-amino-acid polypeptide reads, in one-letter code: GTPase Obg (392 aa).

In terms of domain architecture, Obg spans 1–159; the sequence is MKFVDEATIK…RELRLELLLL (159 aa). The OBG-type G domain occupies 160 to 333; that stretch reads ADVGMLGLPN…VCNELSDFMD (174 aa). GTP is bound by residues 166-173, 191-195, 213-216, 283-286, and 314-316; these read GLPNAGKS, FTTLI, DIPG, NKTD, and AAV. Mg(2+) contacts are provided by S173 and T193. The tract at residues 364–392 is disordered; that stretch reads GKNVVTEDGDDDDDWDDEEDDGHVIYARD. The segment covering 370-384 has biased composition (acidic residues); the sequence is EDGDDDDDWDDEEDD.

Belongs to the TRAFAC class OBG-HflX-like GTPase superfamily. OBG GTPase family. In terms of assembly, monomer. Mg(2+) serves as cofactor.

It is found in the cytoplasm. An essential GTPase which binds GTP, GDP and possibly (p)ppGpp with moderate affinity, with high nucleotide exchange rates and a fairly low GTP hydrolysis rate. Plays a role in control of the cell cycle, stress response, ribosome biogenesis and in those bacteria that undergo differentiation, in morphogenesis control. In Aliivibrio salmonicida (strain LFI1238) (Vibrio salmonicida (strain LFI1238)), this protein is GTPase Obg.